The following is a 932-amino-acid chain: DNA mismatch repair protein MutS (932 aa).

ATP is bound at residue glycine 615–serine 622.

It belongs to the DNA mismatch repair MutS family.

This protein is involved in the repair of mismatches in DNA. It is possible that it carries out the mismatch recognition step. This protein has a weak ATPase activity. In Clostridium botulinum (strain Hall / ATCC 3502 / NCTC 13319 / Type A), this protein is DNA mismatch repair protein MutS.